Consider the following 258-residue polypeptide: Snake venom serine protease HS114 (258 aa).

Positions 1–18 (MVLVRVVANLLILQLSYA) are cleaved as a signal peptide. Residues 19–24 (QKVSEL) constitute a propeptide that is removed on maturation. The 225-residue stretch at 25–249 (VVGGDECNIN…YNTWIESVIA (225 aa)) folds into the Peptidase S1 domain. 6 disulfide bridges follow: C31–C163, C50–C66, C98–C256, C142–C210, C174–C189, and C200–C225. An N-linked (GlcNAc...) asparagine glycan is attached at N44. Active-site charge relay system residues include H65 and D110. Residue S204 is the Charge relay system of the active site.

It belongs to the peptidase S1 family. Snake venom subfamily. In terms of assembly, monomer. Post-translationally, N-glycosylated. Contains approximately 10% carbohydrates. As to expression, expressed by the venom gland.

The protein localises to the secreted. Inhibited by benzamidine, PMSF, leupeptin, SDS and DTT, but not by EDTA, and commercial antivenom. Snake venom serine protease that shows non-specific action on fibrinogen. It preferentially degrades fibrinogen Aalpha (FGA), releasing fibrinopeptide A, and shows a lower activity on fibrinogen Bbeta (FGB), releasing fibrinopeptide B and other uncommon fibrinopeptides. Also shows low fibrinolytic activity compared to plasmin. Has high enzymatic activity on the substrates for activated protein C and factor XIa, and for thrombin. Shows a wide activity spectrum at different peptide sequences, with a preferential cleavage at Lys-|-Xaa over Arg-|-Xaa bonds. This is Snake venom serine protease HS114 from Bothrops jararaca (Jararaca).